Reading from the N-terminus, the 320-residue chain is Dimethyladenosine transferase (320 aa).

S-adenosyl-L-methionine contacts are provided by His-38, Leu-40, Gly-65, Glu-86, Asp-114, and Asn-129.

It belongs to the class I-like SAM-binding methyltransferase superfamily. rRNA adenine N(6)-methyltransferase family.

It carries out the reaction adenosine(1779)/adenosine(1780) in 18S rRNA + 4 S-adenosyl-L-methionine = N(6)-dimethyladenosine(1779)/N(6)-dimethyladenosine(1780) in 18S rRNA + 4 S-adenosyl-L-homocysteine + 4 H(+). Functionally, specifically dimethylates two adjacent adenosines in the loop of a conserved hairpin near the 3'-end of 18S rRNA in the 40S particle. This chain is Dimethyladenosine transferase (DIM1), found in Kluyveromyces lactis (strain ATCC 8585 / CBS 2359 / DSM 70799 / NBRC 1267 / NRRL Y-1140 / WM37) (Yeast).